The primary structure comprises 352 residues: Zinc finger protein 185 (352 aa).

Disordered stretches follow at residues 1–73 (MTTE…ELQS) and 86–121 (DVLPEKNQEPPALARPDSGLSSSTTEKIAHRQITPP). Position 18 is a phosphoserine (Ser-18). Residues 61 to 72 (KKTTSSPTQELQ) are compositionally biased toward polar residues. Thr-137 bears the Phosphothreonine mark. The segment covering 251–268 (VSSGKPVSSHCDSPSSIE) has biased composition (polar residues). A disordered region spans residues 251-287 (VSSGKPVSSHCDSPSSIEDSLDLAKKPPHEGTPSERP). Over residues 272–287 (DLAKKPPHEGTPSERP) the composition is skewed to basic and acidic residues. Residues 292 to 347 (CTYCSHEIQDCPKITLEHLGICCHEYCFKCGICNKPMGDLLDQIFIHRDTIHCGKC) enclose the LIM zinc-binding domain.

As to expression, expressed in skin, kidney, ovary, testis. Also expressed in brain, cartilage, heart, lung, spleen and thymus.

It localises to the cytoplasm. The protein resides in the cytoskeleton. The protein localises to the cell junction. It is found in the focal adhesion. Its function is as follows. May be involved in the regulation of cellular proliferation and/or differentiation. The sequence is that of Zinc finger protein 185 (Znf185) from Mus musculus (Mouse).